A 148-amino-acid chain; its full sequence is 3-dehydroquinate dehydratase (148 aa).

Catalysis depends on Tyr26, which acts as the Proton acceptor. 3 residues coordinate substrate: Asn75, His81, and Asp88. His101 serves as the catalytic Proton donor. Substrate contacts are provided by residues 102–103 (LS) and Arg112.

It belongs to the type-II 3-dehydroquinase family. Homododecamer.

The enzyme catalyses 3-dehydroquinate = 3-dehydroshikimate + H2O. It functions in the pathway metabolic intermediate biosynthesis; chorismate biosynthesis; chorismate from D-erythrose 4-phosphate and phosphoenolpyruvate: step 3/7. In terms of biological role, catalyzes a trans-dehydration via an enolate intermediate. The chain is 3-dehydroquinate dehydratase from Shewanella frigidimarina (strain NCIMB 400).